The sequence spans 80 residues: MKTGIKKVKLHVKKNDSVVVISGNDKGKAGKVLRVYPQKGRVIIEGVNIRKRHMKPTQSHPQGSIIEREFPIHASNVKKS.

Positions 53 to 80 (HMKPTQSHPQGSIIEREFPIHASNVKKS) are disordered.

Belongs to the universal ribosomal protein uL24 family. In terms of assembly, part of the 50S ribosomal subunit.

One of two assembly initiator proteins, it binds directly to the 5'-end of the 23S rRNA, where it nucleates assembly of the 50S subunit. Functionally, one of the proteins that surrounds the polypeptide exit tunnel on the outside of the subunit. This Chlorobium limicola (strain DSM 245 / NBRC 103803 / 6330) protein is Large ribosomal subunit protein uL24.